A 307-amino-acid polypeptide reads, in one-letter code: MSSIDLSTVRTFLLGLQERITHAIAEVDGQPFMTDHWQKEPGETLQGNGITKILEQGRVFERAGCGFSHVRGPRLPPSATQHRPELAGAAFEAMGVSLVFHPRNPYVPTVHMNVRMLAATPVGENCEPVCWFGGGMDLTPFYGFDEDAVHFHQVCKDSLKPFGDDKYPRFKQWCDEYFYLKHRQEQRGIGGVFFDDFQELGLAQSFAMMQSVGDSFLQAYLPIVERRKDSLFGERERDFQLYRRGRYVEFNLVWDRGTHFGLQSGGRTESILMSMPPLASWSYQRPNEAGSPEERLYKEFLVRRDWV.

S97 is a binding site for substrate. H101 and H111 together coordinate a divalent metal cation. H111 serves as the catalytic Proton donor. 113–115 (NVR) is a binding site for substrate. Positions 152 and 182 each coordinate a divalent metal cation. An important for dimerization region spans residues 247-282 (YVEFNLVWDRGTHFGLQSGGRTESILMSMPPLASWS). Substrate is bound at residue 265-267 (GGR).

Belongs to the aerobic coproporphyrinogen-III oxidase family. As to quaternary structure, homodimer. The cofactor is a divalent metal cation.

Its subcellular location is the cytoplasm. The catalysed reaction is coproporphyrinogen III + O2 + 2 H(+) = protoporphyrinogen IX + 2 CO2 + 2 H2O. The protein operates within porphyrin-containing compound metabolism; protoporphyrin-IX biosynthesis; protoporphyrinogen-IX from coproporphyrinogen-III (O2 route): step 1/1. Functionally, involved in the heme biosynthesis. Catalyzes the aerobic oxidative decarboxylation of propionate groups of rings A and B of coproporphyrinogen-III to yield the vinyl groups in protoporphyrinogen-IX. The protein is Oxygen-dependent coproporphyrinogen-III oxidase of Polaromonas naphthalenivorans (strain CJ2).